The chain runs to 1379 residues: Attractin-like protein 1 (1379 aa).

The segment at 1–23 (METGGRARTGTPQPAAPGVWRAR) is disordered. A signal peptide spans 1 to 52 (METGGRARTGTPQPAAPGVWRARPAGGGGGGASSWLLDGNSWLLCYGFLYLA). Residues 53–91 (LYAQVSQSKPCERTGSCFSGRCVNSTCLCDPGWVGDQCQ) enclose the EGF-like 1 domain. Over 53-1230 (LYAQVSQSKP…FSQHNTIMDL (1178 aa)) the chain is Extracellular. 3 cysteine pairs are disulfide-bonded: C63/C79, C81/C90, and C93/C119. N-linked (GlcNAc...) asparagine glycosylation is present at N76. The region spanning 93–209 (CQGRFKLTEP…TGFNIFYSIN (117 aa)) is the CUB domain. N174 and N198 each carry an N-linked (GlcNAc...) asparagine glycan. Residues 207-245 (SINSCPNNCSGHGKCTTSVSVPSQVYCECDKYWKGEACD) form the EGF-like 2 domain. Cystine bridges form between C211/C221, C215/C233, and C235/C244. Kelch repeat units lie at residues 316 to 365 (FMWV…LYQE), 367 to 415 (IFMY…EGHS), 427 to 475 (VMII…SVYD), 480 to 531 (SIYV…LING), 533 to 591 (MLIF…VING), and 592 to 638 (SMYI…WNKN). N380 carries N-linked (GlcNAc...) asparagine glycosylation. PSI domains lie at 614-657 (NCKA…AKCP), 666-709 (RCYR…TKCH), and 715-760 (ICNK…DACL). Residues 755–873 (IGDACLRVNS…TSMANGLVCE (119 aa)) enclose the C-type lectin domain. 3 N-linked (GlcNAc...) asparagine glycosylation sites follow: N763, N778, and N898. C776 and C872 are joined by a disulfide. PSI domains lie at 889-939 (PCSL…ATCS) and 942-1012 (NCSG…IQCP). 8 disulfides stabilise this stretch: C1014/C1022, C1016/C1028, C1031/C1040, C1043/C1057, C1060/C1069, C1062/C1076, C1078/C1088, and C1091/C1106. Laminin EGF-like domains are found at residues 1014-1059 (CQCN…QCTA) and 1060-1108 (CTCS…TCYY). N-linked (GlcNAc...) asparagine glycosylation is present at N1157. The chain crosses the membrane as a helical span at residues 1231–1251 (VQFFVTFFSCFLSLLLVAAVV). Over 1252–1379 (WKIKQTCWAS…HLSTRQGTCV (128 aa)) the chain is Cytoplasmic. Residues 1354–1379 (KASDSKDKTSGVRNRKHLSTRQGTCV) form a disordered region.

Interacts with MC4R.

Its subcellular location is the membrane. Its function is as follows. May play a role in melanocortin signaling pathways that regulate energy homeostasis. The chain is Attractin-like protein 1 (ATRNL1) from Homo sapiens (Human).